The primary structure comprises 42 residues: Conodipine-M beta chain (42 aa).

As to quaternary structure, heterodimer of an alpha and a beta chains; probably disulfide-linked. In terms of tissue distribution, expressed by the venom duct.

It localises to the secreted. Its function is as follows. Heterodimer: conodipine-M catalyzes the calcium-dependent hydrolysis of the 2-acyl groups in 3-sn-phosphoglycerides. This activity may be supported by the alpha chain. Conodipine-M inhibits the binding of isradipine (a ligand specific for L-type calcium channel) to L-type calcium channels. The chain is Conodipine-M beta chain from Conus magus (Magical cone).